Reading from the N-terminus, the 258-residue chain is Flap endonuclease Xni (258 aa).

D109 is a binding site for Mg(2+). The 5'-3' exonuclease domain occupies 165–254 (VKPEQLPDYW…GFNLQDIRYL (90 aa)). K(+)-binding residues include L176, A177, P185, I187, and I190. The segment at 189-194 (GIGPKA) is interaction with DNA.

Belongs to the Xni family. Requires Mg(2+) as cofactor. K(+) is required as a cofactor.

Has flap endonuclease activity. During DNA replication, flap endonucleases cleave the 5'-overhanging flap structure that is generated by displacement synthesis when DNA polymerase encounters the 5'-end of a downstream Okazaki fragment. The chain is Flap endonuclease Xni from Photobacterium profundum (strain SS9).